Reading from the N-terminus, the 211-residue chain is Regulator of G-protein signaling 2 (211 aa).

Residues 32-66 (KMKRTLLKDWKTRLSYFLQNSSTPGKPKTGKKSKQ) form a necessary for membrane association region. Residues 79-116 (LWAEAFDELLASKYGLAAFRAFLKSEFCEENIEFWLAC) form a necessary to inhibit protein synthesis region. The RGS domain occupies 83 to 199 (AFDELLASKY…LESEFYQDLC (117 aa)).

In terms of assembly, interacts with GNAQ. Does not interact with GNAI1 and GNAI3. Interacts with EIF2B5. Interacts with PRKG1 (isoform alpha). In terms of processing, phosphorylated by protein kinase C. Phosphorylation by PRKG1 leads to activation of RGS2 activity.

The protein localises to the cell membrane. The protein resides in the cytoplasm. It is found in the nucleus. It localises to the nucleolus. Regulates G protein-coupled receptor signaling cascades. Inhibits signal transduction by increasing the GTPase activity of G protein alpha subunits, thereby driving them into their inactive GDP-bound form. It is involved in the negative regulation of the angiotensin-activated signaling pathway. Plays a role in the regulation of blood pressure in response to signaling via G protein-coupled receptors and GNAQ. Plays a role in regulating the constriction and relaxation of vascular smooth muscle. Binds EIF2B5 and blocks its activity, thereby inhibiting the translation of mRNA into protein. The polypeptide is Regulator of G-protein signaling 2 (Rgs2) (Rattus norvegicus (Rat)).